The primary structure comprises 869 residues: 1-phosphatidylinositol 4,5-bisphosphate phosphodiesterase 1 (869 aa).

An EF-hand domain is found at V269–R304. Residues D282, N284, N286, and E293 each contribute to the Ca(2+) site. Positions Y382–K520 constitute a PI-PLC X-box domain. Catalysis depends on residues H395 and H439. Substrate contacts are provided by K518 and K520. The interval A546–R571 is disordered. Residues T558–S568 are compositionally biased toward low complexity. Residues I590 to L709 enclose the PI-PLC Y-box domain. Substrate-binding residues include S614 and R643. A C2 domain is found at V713–L862.

As to quaternary structure, interacts with SGD1. It depends on Ca(2+) as a cofactor.

The catalysed reaction is a 1,2-diacyl-sn-glycero-3-phospho-(1D-myo-inositol-4,5-bisphosphate) + H2O = 1D-myo-inositol 1,4,5-trisphosphate + a 1,2-diacyl-sn-glycerol + H(+). The production of the second messenger molecules diacylglycerol (DAG) and inositol 1,4,5-trisphosphate (IP3) is mediated by activated phosphatidylinositol-specific phospholipase C enzymes. Required for cell growth, osmoresistance and expression of GPD1. The chain is 1-phosphatidylinositol 4,5-bisphosphate phosphodiesterase 1 (PLC1) from Saccharomyces cerevisiae (strain ATCC 204508 / S288c) (Baker's yeast).